The sequence spans 130 residues: MIAAFIKRHAPQRRLSLWLALPVVALLALVMMPALFRHDSALQIRASRQGASLPDGFYVYQTLSAQGIHIKSITPEQNSLVIRFDSQEQSYAAERVLRELLAQDFDIAHHHNQSATGWINRISFKPQSIG.

Over 1–15 (MIAAFIKRHAPQRRL) the chain is Cytoplasmic. The chain crosses the membrane as a helical span at residues 16 to 36 (SLWLALPVVALLALVMMPALF). The Periplasmic segment spans residues 37–130 (RHDSALQIRA…RISFKPQSIG (94 aa)).

Belongs to the MzrA family. In terms of assembly, interacts with EnvZ.

It is found in the cell inner membrane. Modulates the activity of the EnvZ/OmpR two-component regulatory system, probably by directly modulating EnvZ enzymatic activity and increasing stability of phosphorylated OmpR. In Erwinia tasmaniensis (strain DSM 17950 / CFBP 7177 / CIP 109463 / NCPPB 4357 / Et1/99), this protein is Modulator protein MzrA.